We begin with the raw amino-acid sequence, 632 residues long: tRNA uridine 5-carboxymethylaminomethyl modification enzyme MnmG (632 aa).

FAD is bound at residue 13-18 (GGGHAG). 274-288 (GPRYCPSIEDKVMRF) is an NAD(+) binding site.

The protein belongs to the MnmG family. As to quaternary structure, homodimer. Heterotetramer of two MnmE and two MnmG subunits. FAD is required as a cofactor.

It localises to the cytoplasm. NAD-binding protein involved in the addition of a carboxymethylaminomethyl (cmnm) group at the wobble position (U34) of certain tRNAs, forming tRNA-cmnm(5)s(2)U34. This is tRNA uridine 5-carboxymethylaminomethyl modification enzyme MnmG from Dichelobacter nodosus (strain VCS1703A).